Here is a 124-residue protein sequence, read N- to C-terminus: Aspartate 1-decarboxylase (124 aa).

Ser-21 (schiff-base intermediate with substrate; via pyruvic acid) is an active-site residue. Ser-21 carries the post-translational modification Pyruvic acid (Ser). Thr-53 is a substrate binding site. Tyr-54 functions as the Proton donor in the catalytic mechanism. A substrate-binding site is contributed by 69-71 (GAA).

This sequence belongs to the PanD family. Heterooctamer of four alpha and four beta subunits. Pyruvate is required as a cofactor. In terms of processing, is synthesized initially as an inactive proenzyme, which is activated by self-cleavage at a specific serine bond to produce a beta-subunit with a hydroxyl group at its C-terminus and an alpha-subunit with a pyruvoyl group at its N-terminus.

It localises to the cytoplasm. The catalysed reaction is L-aspartate + H(+) = beta-alanine + CO2. Its pathway is cofactor biosynthesis; (R)-pantothenate biosynthesis; beta-alanine from L-aspartate: step 1/1. Catalyzes the pyruvoyl-dependent decarboxylation of aspartate to produce beta-alanine. This is Aspartate 1-decarboxylase from Dehalococcoides mccartyi (strain CBDB1).